The primary structure comprises 602 residues: Aspartate--tRNA(Asp/Asn) ligase (602 aa).

Residue Glu-177 participates in L-aspartate binding. The tract at residues 201 to 204 is aspartate; sequence QLFK. Arg-223 is an L-aspartate binding site. Residues 223–225 and Gln-232 each bind ATP; that span reads RDE. His-460 contacts L-aspartate. Residue Glu-497 participates in ATP binding. Position 504 (Arg-504) interacts with L-aspartate. 549-552 contacts ATP; that stretch reads GLDR.

Belongs to the class-II aminoacyl-tRNA synthetase family. Type 1 subfamily. As to quaternary structure, homodimer.

The protein resides in the cytoplasm. The catalysed reaction is tRNA(Asx) + L-aspartate + ATP = L-aspartyl-tRNA(Asx) + AMP + diphosphate. Functionally, aspartyl-tRNA synthetase with relaxed tRNA specificity since it is able to aspartylate not only its cognate tRNA(Asp) but also tRNA(Asn). Reaction proceeds in two steps: L-aspartate is first activated by ATP to form Asp-AMP and then transferred to the acceptor end of tRNA(Asp/Asn). This is Aspartate--tRNA(Asp/Asn) ligase from Prochlorococcus marinus (strain MIT 9515).